Reading from the N-terminus, the 274-residue chain is Large ribosomal subunit protein uL2 (274 aa).

Residues 224-274 (VAMNPVDHPHGGGEGRTSGGRHPVTPWGIPTKGYKTRRNKRSNKLIVQKRK) are disordered. The segment covering 257–274 (YKTRRNKRSNKLIVQKRK) has biased composition (basic residues).

The protein belongs to the universal ribosomal protein uL2 family. In terms of assembly, part of the 50S ribosomal subunit. Forms a bridge to the 30S subunit in the 70S ribosome.

Functionally, one of the primary rRNA binding proteins. Required for association of the 30S and 50S subunits to form the 70S ribosome, for tRNA binding and peptide bond formation. It has been suggested to have peptidyltransferase activity; this is somewhat controversial. Makes several contacts with the 16S rRNA in the 70S ribosome. The chain is Large ribosomal subunit protein uL2 from Francisella tularensis subsp. tularensis (strain FSC 198).